The primary structure comprises 119 residues: MARVKRAVNARKHHRKILKLAKGYYGGKSKLFKTANESVIRALRNAYVGRKLKKRDFRKLWIVRINAAARINGLSYSKFMNGIKTAGININRKMLSEIAINDPKTFTELVQVAKAQLNV.

This sequence belongs to the bacterial ribosomal protein bL20 family.

Its function is as follows. Binds directly to 23S ribosomal RNA and is necessary for the in vitro assembly process of the 50S ribosomal subunit. It is not involved in the protein synthesizing functions of that subunit. This Clostridium kluyveri (strain NBRC 12016) protein is Large ribosomal subunit protein bL20.